The chain runs to 235 residues: 7-cyano-7-deazaguanine synthase (235 aa).

12–22 provides a ligand contact to ATP; the sequence is FSGGQDSTACL. Residues C200, C215, C218, and C221 each contribute to the Zn(2+) site.

This sequence belongs to the QueC family. Zn(2+) serves as cofactor.

It carries out the reaction 7-carboxy-7-deazaguanine + NH4(+) + ATP = 7-cyano-7-deazaguanine + ADP + phosphate + H2O + H(+). It functions in the pathway purine metabolism; 7-cyano-7-deazaguanine biosynthesis. Functionally, catalyzes the ATP-dependent conversion of 7-carboxy-7-deazaguanine (CDG) to 7-cyano-7-deazaguanine (preQ(0)). This chain is 7-cyano-7-deazaguanine synthase, found in Methylibium petroleiphilum (strain ATCC BAA-1232 / LMG 22953 / PM1).